Consider the following 462-residue polypeptide: Glycine--tRNA ligase (462 aa).

Residues Arg100 and Glu170 each contribute to the substrate site. ATP-binding positions include Arg202–Glu204, Phe212–Phe217, Glu287–Leu288, and Gly331–Arg334. Phe217 to Glu221 is a binding site for substrate. Position 327-331 (Glu327–Gly331) interacts with substrate.

This sequence belongs to the class-II aminoacyl-tRNA synthetase family. As to quaternary structure, homodimer.

Its subcellular location is the cytoplasm. The catalysed reaction is tRNA(Gly) + glycine + ATP = glycyl-tRNA(Gly) + AMP + diphosphate. Its function is as follows. Catalyzes the attachment of glycine to tRNA(Gly). In Malacoplasma penetrans (strain HF-2) (Mycoplasma penetrans), this protein is Glycine--tRNA ligase.